The sequence spans 841 residues: Protein translocase subunit SecA (841 aa).

ATP-binding positions include Gln85, 103 to 107 (GEGKT), and Asp492. Positions 788-841 (EVVQGQTTAHQPQEGDEEKTVKKKPVRKVVDIGRNSPCHCGSGKKYKNCHGKTE) are disordered. The Zn(2+) site is built by Cys825, Cys827, Cys836, and His837. The segment covering 829–841 (SGKKYKNCHGKTE) has biased composition (basic residues).

It belongs to the SecA family. Monomer and homodimer. Part of the essential Sec protein translocation apparatus which comprises SecA, SecYEG and auxiliary proteins SecDF. Other proteins may also be involved. Zn(2+) is required as a cofactor.

It is found in the cell membrane. The protein localises to the cytoplasm. The enzyme catalyses ATP + H2O + cellular proteinSide 1 = ADP + phosphate + cellular proteinSide 2.. In terms of biological role, part of the Sec protein translocase complex. Interacts with the SecYEG preprotein conducting channel. Has a central role in coupling the hydrolysis of ATP to the transfer of proteins into and across the cell membrane, serving as an ATP-driven molecular motor driving the stepwise translocation of polypeptide chains across the membrane. The chain is Protein translocase subunit SecA from Bacillus pumilus (strain SAFR-032).